We begin with the raw amino-acid sequence, 326 residues long: Histone-lysine N-methyltransferase Suv4-20 (326 aa).

In terms of domain architecture, SET spans 163–273 (QECTRYSLEG…AGDEITCFYG (111 aa)). The interval 294–313 (RGKFSTSDEEENDEPSALSE) is disordered.

It belongs to the class V-like SAM-binding methyltransferase superfamily. Histone-lysine methyltransferase family. Suvar4-20 subfamily.

The protein localises to the nucleus. The protein resides in the chromosome. The catalysed reaction is N(6)-methyl-L-lysyl(20)-[histone H4] + S-adenosyl-L-methionine = N(6),N(6)-dimethyl-L-lysyl(20)-[histone H4] + S-adenosyl-L-homocysteine + H(+). It carries out the reaction N(6),N(6)-dimethyl-L-lysyl(20)-[histone H4] + S-adenosyl-L-methionine = N(6),N(6),N(6)-trimethyl-L-lysyl(20)-[histone H4] + S-adenosyl-L-homocysteine + H(+). In terms of biological role, histone methyltransferase that specifically di- and trimethylates 'Lys-20' of histone H4 (H4K20me2/me3). H4 'Lys-20' trimethylation represents a specific tag for epigenetic transcriptional repression. Contributes to dosage compensation of X chromosome-relative to autosome-linked gene expression, possibly by converting H4K20me1 to H4K20m2/me3 on autosomes. Involved in the regulation of growth and body fat metabolism downstream of the TOR complex 2 pathway. The protein is Histone-lysine N-methyltransferase Suv4-20 of Caenorhabditis briggsae.